The sequence spans 404 residues: Aspartokinase 1 (404 aa).

7–10 lines the ATP pocket; that stretch reads KFGG. 25-30 lines the substrate pocket; the sequence is HIKEAI. Serine 41 provides a ligand contact to ATP. Residues 52–54, glutamate 79, 130–131, 155–158, and serine 158 contribute to the substrate site; these read TDS, LA, and RGGS. ATP contacts are provided by residues 178–179 and 184–189; these read TD and MTADPR. Substrate is bound by residues 299-301, 355-356, 369-370, and 376-377; these read SVD, VT, PI, and SH. Positions 344–404 constitute an ACT domain; the sequence is AVGAGIMGVP…ALHEVFELSK (61 aa).

It belongs to the aspartokinase family. In terms of assembly, tetramer consisting of 2 isoforms Alpha (catalytic) and 2 isoforms Beta (function not known).

It carries out the reaction L-aspartate + ATP = 4-phospho-L-aspartate + ADP. Its pathway is amino-acid biosynthesis; L-lysine biosynthesis via DAP pathway; (S)-tetrahydrodipicolinate from L-aspartate: step 1/4. It participates in amino-acid biosynthesis; L-methionine biosynthesis via de novo pathway; L-homoserine from L-aspartate: step 1/3. The protein operates within amino-acid biosynthesis; L-threonine biosynthesis; L-threonine from L-aspartate: step 1/5. Its activity is regulated as follows. Diaminopimelate-sensitive. Its function is as follows. Catalyzes the phosphorylation of the beta-carboxyl group of aspartic acid with ATP to yield 4-phospho-L-aspartate, which is involved in the branched biosynthetic pathway leading to the biosynthesis of amino acids threonine, isoleucine and methionine. The chain is Aspartokinase 1 (dapG) from Bacillus subtilis (strain 168).